The following is a 547-amino-acid chain: Glucose-6-phosphate isomerase (547 aa).

Catalysis depends on E352, which acts as the Proton donor. Catalysis depends on residues H383 and K511.

It belongs to the GPI family.

It localises to the cytoplasm. The enzyme catalyses alpha-D-glucose 6-phosphate = beta-D-fructose 6-phosphate. The protein operates within carbohydrate biosynthesis; gluconeogenesis. It functions in the pathway carbohydrate degradation; glycolysis; D-glyceraldehyde 3-phosphate and glycerone phosphate from D-glucose: step 2/4. Functionally, catalyzes the reversible isomerization of glucose-6-phosphate to fructose-6-phosphate. In Rhodospirillum rubrum (strain ATCC 11170 / ATH 1.1.1 / DSM 467 / LMG 4362 / NCIMB 8255 / S1), this protein is Glucose-6-phosphate isomerase.